An 80-amino-acid chain; its full sequence is Translation initiation factor IF-1, chloroplastic (80 aa).

The 74-residue stretch at 1–74 (MKEQKWIHEG…TRGRIIYRLR (74 aa)) folds into the S1-like domain.

Belongs to the IF-1 family. Component of the 30S ribosomal translation pre-initiation complex which assembles on the 30S ribosome in the order IF-2 and IF-3, IF-1 and N-formylmethionyl-tRNA(fMet); mRNA recruitment can occur at any time during PIC assembly.

It localises to the plastid. Its subcellular location is the chloroplast. Functionally, one of the essential components for the initiation of protein synthesis. Stabilizes the binding of IF-2 and IF-3 on the 30S subunit to which N-formylmethionyl-tRNA(fMet) subsequently binds. Helps modulate mRNA selection, yielding the 30S pre-initiation complex (PIC). Upon addition of the 50S ribosomal subunit IF-1, IF-2 and IF-3 are released leaving the mature 70S translation initiation complex. The polypeptide is Translation initiation factor IF-1, chloroplastic (Illicium parviflorum (Yellow anise tree)).